The following is a 140-amino-acid chain: Large ribosomal subunit protein uL16 (140 aa).

It belongs to the universal ribosomal protein uL16 family. As to quaternary structure, part of the 50S ribosomal subunit.

Binds 23S rRNA and is also seen to make contacts with the A and possibly P site tRNAs. This is Large ribosomal subunit protein uL16 from Amoebophilus asiaticus (strain 5a2).